The sequence spans 284 residues: 4-diphosphocytidyl-2-C-methyl-D-erythritol kinase (284 aa).

The active site involves Lys13. 96–106 (PMGGGLGGGSS) serves as a coordination point for ATP. Asp138 is an active-site residue.

This sequence belongs to the GHMP kinase family. IspE subfamily.

The enzyme catalyses 4-CDP-2-C-methyl-D-erythritol + ATP = 4-CDP-2-C-methyl-D-erythritol 2-phosphate + ADP + H(+). It participates in isoprenoid biosynthesis; isopentenyl diphosphate biosynthesis via DXP pathway; isopentenyl diphosphate from 1-deoxy-D-xylulose 5-phosphate: step 3/6. Its function is as follows. Catalyzes the phosphorylation of the position 2 hydroxy group of 4-diphosphocytidyl-2C-methyl-D-erythritol. The chain is 4-diphosphocytidyl-2-C-methyl-D-erythritol kinase from Chromobacterium violaceum (strain ATCC 12472 / DSM 30191 / JCM 1249 / CCUG 213 / NBRC 12614 / NCIMB 9131 / NCTC 9757 / MK).